We begin with the raw amino-acid sequence, 232 residues long: uncharacterized protein (232 aa).

5 consecutive transmembrane segments (helical) span residues 4 to 24 (LLGV…YVFE), 42 to 62 (VLVG…LAVL), 100 to 120 (LFFI…ILHM), 145 to 165 (LAFV…FFTL), and 171 to 191 (GNLI…WVGF).

It is found in the cell membrane. This is an uncharacterized protein from Aquifex aeolicus (strain VF5).